The chain runs to 59 residues: UPF0434 protein COSY_0767 (59 aa).

It belongs to the UPF0434 family.

The protein is UPF0434 protein COSY_0767 of Vesicomyosocius okutanii subsp. Calyptogena okutanii (strain HA).